The following is a 137-amino-acid chain: Small ribosomal subunit protein uS11 (137 aa).

The tract at residues 116 to 137 is disordered; the sequence is EDVTPIPHDGTRRPGGKRGRRV.

It belongs to the universal ribosomal protein uS11 family. In terms of assembly, part of the 30S ribosomal subunit.

In terms of biological role, located on the platform of the 30S subunit. In Methanopyrus kandleri (strain AV19 / DSM 6324 / JCM 9639 / NBRC 100938), this protein is Small ribosomal subunit protein uS11.